The following is a 369-amino-acid chain: Anhydro-N-acetylmuramic acid kinase (369 aa).

12–19 (GTSMDGVD) provides a ligand contact to ATP.

Belongs to the anhydro-N-acetylmuramic acid kinase family.

It carries out the reaction 1,6-anhydro-N-acetyl-beta-muramate + ATP + H2O = N-acetyl-D-muramate 6-phosphate + ADP + H(+). Its pathway is amino-sugar metabolism; 1,6-anhydro-N-acetylmuramate degradation. It functions in the pathway cell wall biogenesis; peptidoglycan recycling. Functionally, catalyzes the specific phosphorylation of 1,6-anhydro-N-acetylmuramic acid (anhMurNAc) with the simultaneous cleavage of the 1,6-anhydro ring, generating MurNAc-6-P. Is required for the utilization of anhMurNAc either imported from the medium or derived from its own cell wall murein, and thus plays a role in cell wall recycling. In Shewanella sp. (strain ANA-3), this protein is Anhydro-N-acetylmuramic acid kinase.